The chain runs to 654 residues: U-box domain-containing protein 12 (654 aa).

Positions 255–329 (IPPEEFRCPI…AQWCESNGIE (75 aa)) constitute a U-box domain. Residues 329 to 352 (EPPKRPNISQPSSKASSSSSAPDD) form a disordered region. Residues 337–349 (SQPSSKASSSSSA) show a composition bias toward low complexity. 5 ARM repeats span residues 387-427 (NHNR…NLSI), 430-469 (ENKGKIVYSSGAVPGIVHVLQKGSMEARENAAATLFSLSV), 471-510 (DENKVTIGAAGAIPPLVTLLSEGSQRGKKDAATALFNLCI), 512-551 (QGNKGKAVRAGLVPVLMRLLTEPESGMVDESLSILAILSS), and 553-592 (PDGKSEVGAADAVPVLVDFIRSGSPRNKENSAAVLVHLCS).

It catalyses the reaction S-ubiquitinyl-[E2 ubiquitin-conjugating enzyme]-L-cysteine + [acceptor protein]-L-lysine = [E2 ubiquitin-conjugating enzyme]-L-cysteine + N(6)-ubiquitinyl-[acceptor protein]-L-lysine.. It participates in protein modification; protein ubiquitination. Its function is as follows. Functions as an E3 ubiquitin ligase. This chain is U-box domain-containing protein 12 (PUB12), found in Arabidopsis thaliana (Mouse-ear cress).